Reading from the N-terminus, the 128-residue chain is Small ribosomal subunit protein uS9 (128 aa).

The tract at residues Pro106 to Arg128 is disordered. The segment covering Lys113–Arg128 has biased composition (basic residues).

This sequence belongs to the universal ribosomal protein uS9 family.

The protein is Small ribosomal subunit protein uS9 of Porphyromonas gingivalis (strain ATCC 33277 / DSM 20709 / CIP 103683 / JCM 12257 / NCTC 11834 / 2561).